The primary structure comprises 101 residues: MAGQKIRIRLKAYDHEAIDASAKKIVETVTRTGARVVGPVPLPTEKNVYCVIRSPHKYKDSREHFEMRTHKRLIDILDPTPKTVDALMRIDLPASVDVNIQ.

It belongs to the universal ribosomal protein uS10 family. Part of the 30S ribosomal subunit.

Its function is as follows. Involved in the binding of tRNA to the ribosomes. In Corynebacterium jeikeium (strain K411), this protein is Small ribosomal subunit protein uS10.